The chain runs to 389 residues: Flavin-dependent monooxygenase (389 aa).

Residues 12-15 (AGVA), 34-35 (EK), glutamine 44, arginine 105, tyrosine 267, and aspartate 289 contribute to the FAD site.

Belongs to the aromatic-ring hydroxylase family. The cofactor is FAD.

It carries out the reaction a tetracycline + NADPH + O2 + H(+) = a (1S,10aS)-3-(CONH2)-1-(Me2N)-3,3a,4,6-(HO)4-2,5-dioxo-1H,10aH,11H,11aH-cyclopenta[b]anthracene + CO + NADP(+) + H2O. The enzyme catalyses 7-chlorotetracycline + NADPH + O2 + H(+) = (1S,10S,10aS)-3-(CONH2)-9-Cl-1-(Me2N)-3,3a,4,10-(HO)4-10-Me-2,5-dioxo-1H,10aH,11H,11aH-cyclopenta[b]anthracen-6-olate + CO + NADP(+) + H2O. Its activity is regulated as follows. Inhibited by anhydrotetracycline. Functionally, an FAD-requiring monooxygenase active on tetracycline antibiotic and some of its derivatives, which leads to their inactivation. Expression in E.coli confers high resistance to tetracycline and oxytetracycline, does not confer resistance to minocycline or tigecycline. The reaction requires NADPH. Expression in L.pneumophila confers resistance to tetracycline. Degrades and confers resistance to tetracycline and chlortetracycline. This Legionella longbeachae serogroup 1 (strain NSW150) protein is Flavin-dependent monooxygenase (tet(56)).